Reading from the N-terminus, the 279-residue chain is Shikimate dehydrogenase (NADP(+)) (279 aa).

Shikimate is bound by residues S14–S16 and T63. Residue K67 is the Proton acceptor of the active site. Position 79 (E79) interacts with NADP(+). Shikimate contacts are provided by N88 and D103. NADP(+) contacts are provided by residues G127–A131, N151–K156, and M219. Shikimate is bound at residue Y221. Residue G242 coordinates NADP(+).

It belongs to the shikimate dehydrogenase family. In terms of assembly, homodimer.

The enzyme catalyses shikimate + NADP(+) = 3-dehydroshikimate + NADPH + H(+). It participates in metabolic intermediate biosynthesis; chorismate biosynthesis; chorismate from D-erythrose 4-phosphate and phosphoenolpyruvate: step 4/7. Its function is as follows. Involved in the biosynthesis of the chorismate, which leads to the biosynthesis of aromatic amino acids. Catalyzes the reversible NADPH linked reduction of 3-dehydroshikimate (DHSA) to yield shikimate (SA). In Caldicellulosiruptor saccharolyticus (strain ATCC 43494 / DSM 8903 / Tp8T 6331), this protein is Shikimate dehydrogenase (NADP(+)).